Consider the following 215-residue polypeptide: Large ribosomal subunit protein uL3 (215 aa).

The tract at residues 136 to 155 (GVSISHRSHGSTGQRQDPGK) is disordered. The residue at position 151 (Gln-151) is an N5-methylglutamine.

This sequence belongs to the universal ribosomal protein uL3 family. As to quaternary structure, part of the 50S ribosomal subunit. Forms a cluster with proteins L14 and L19. Methylated by PrmB.

In terms of biological role, one of the primary rRNA binding proteins, it binds directly near the 3'-end of the 23S rRNA, where it nucleates assembly of the 50S subunit. This chain is Large ribosomal subunit protein uL3, found in Rickettsia conorii (strain ATCC VR-613 / Malish 7).